Reading from the N-terminus, the 159-residue chain is Ribosomal RNA large subunit methyltransferase H (159 aa).

Residues Leu76, Gly108, and 127–132 contribute to the S-adenosyl-L-methionine site; that span reads LSRLTF.

The protein belongs to the RNA methyltransferase RlmH family. Homodimer.

The protein resides in the cytoplasm. It catalyses the reaction pseudouridine(1915) in 23S rRNA + S-adenosyl-L-methionine = N(3)-methylpseudouridine(1915) in 23S rRNA + S-adenosyl-L-homocysteine + H(+). Functionally, specifically methylates the pseudouridine at position 1915 (m3Psi1915) in 23S rRNA. The chain is Ribosomal RNA large subunit methyltransferase H from Syntrophomonas wolfei subsp. wolfei (strain DSM 2245B / Goettingen).